A 968-amino-acid polypeptide reads, in one-letter code: RNA polymerase-associated protein RapA (968 aa).

The Helicase ATP-binding domain maps to 164–334; it reads DVGRRHAPRV…FARLRLLDPN (171 aa). Residue 177-184 coordinates ATP; that stretch reads DEVGLGKT. A DEAH box motif is present at residues 280–283; the sequence is DEAH. A Helicase C-terminal domain is found at 490–685; that stretch reads RVEWLMGYLT…ALKAQLEQGR (196 aa).

The protein belongs to the SNF2/RAD54 helicase family. RapA subfamily. As to quaternary structure, interacts with the RNAP. Has a higher affinity for the core RNAP than for the holoenzyme. Its ATPase activity is stimulated by binding to RNAP.

Transcription regulator that activates transcription by stimulating RNA polymerase (RNAP) recycling in case of stress conditions such as supercoiled DNA or high salt concentrations. Probably acts by releasing the RNAP, when it is trapped or immobilized on tightly supercoiled DNA. Does not activate transcription on linear DNA. Probably not involved in DNA repair. The sequence is that of RNA polymerase-associated protein RapA from Salmonella typhimurium (strain LT2 / SGSC1412 / ATCC 700720).